We begin with the raw amino-acid sequence, 258 residues long: Imidazole glycerol phosphate synthase subunit HisF (258 aa).

Active-site residues include D11 and D130.

The protein belongs to the HisA/HisF family. In terms of assembly, heterodimer of HisH and HisF.

The protein localises to the cytoplasm. It catalyses the reaction 5-[(5-phospho-1-deoxy-D-ribulos-1-ylimino)methylamino]-1-(5-phospho-beta-D-ribosyl)imidazole-4-carboxamide + L-glutamine = D-erythro-1-(imidazol-4-yl)glycerol 3-phosphate + 5-amino-1-(5-phospho-beta-D-ribosyl)imidazole-4-carboxamide + L-glutamate + H(+). Its pathway is amino-acid biosynthesis; L-histidine biosynthesis; L-histidine from 5-phospho-alpha-D-ribose 1-diphosphate: step 5/9. In terms of biological role, IGPS catalyzes the conversion of PRFAR and glutamine to IGP, AICAR and glutamate. The HisF subunit catalyzes the cyclization activity that produces IGP and AICAR from PRFAR using the ammonia provided by the HisH subunit. This Citrobacter koseri (strain ATCC BAA-895 / CDC 4225-83 / SGSC4696) protein is Imidazole glycerol phosphate synthase subunit HisF.